The primary structure comprises 300 residues: ATP synthase gamma chain (300 aa).

Belongs to the ATPase gamma chain family. F-type ATPases have 2 components, CF(1) - the catalytic core - and CF(0) - the membrane proton channel. CF(1) has five subunits: alpha(3), beta(3), gamma(1), delta(1), epsilon(1). CF(0) has three main subunits: a, b and c.

It is found in the cell membrane. In terms of biological role, produces ATP from ADP in the presence of a proton gradient across the membrane. The gamma chain is believed to be important in regulating ATPase activity and the flow of protons through the CF(0) complex. This Enterococcus hirae (strain ATCC 9790 / DSM 20160 / JCM 8729 / LMG 6399 / NBRC 3181 / NCIMB 6459 / NCDO 1258 / NCTC 12367 / WDCM 00089 / R) protein is ATP synthase gamma chain.